We begin with the raw amino-acid sequence, 212 residues long: 3,4-dihydroxy-2-butanone 4-phosphate synthase (212 aa).

D-ribulose 5-phosphate contacts are provided by residues 37–38 (RE), Asp-42, 150–154 (RRGHT), and Glu-174. Residue Glu-38 participates in Mg(2+) binding. His-153 serves as a coordination point for Mg(2+).

The protein belongs to the DHBP synthase family. As to quaternary structure, homodimer. Requires Mg(2+) as cofactor. Mn(2+) serves as cofactor.

The catalysed reaction is D-ribulose 5-phosphate = (2S)-2-hydroxy-3-oxobutyl phosphate + formate + H(+). It functions in the pathway cofactor biosynthesis; riboflavin biosynthesis; 2-hydroxy-3-oxobutyl phosphate from D-ribulose 5-phosphate: step 1/1. In terms of biological role, catalyzes the conversion of D-ribulose 5-phosphate to formate and 3,4-dihydroxy-2-butanone 4-phosphate. The chain is 3,4-dihydroxy-2-butanone 4-phosphate synthase from Histophilus somni (strain 129Pt) (Haemophilus somnus).